The following is a 146-amino-acid chain: uncharacterized protein (146 aa).

The next 4 helical transmembrane spans lie at 1–21 (MFAN…AASL), 35–55 (AAVY…LFVG), 87–107 (GGAG…GVGH), and 111–131 (AIAA…GGHL).

It is found in the cell membrane. This is an uncharacterized protein from Mycobacterium tuberculosis (strain CDC 1551 / Oshkosh).